A 235-amino-acid polypeptide reads, in one-letter code: Uracil-DNA glycosylase (235 aa).

Aspartate 71 (proton acceptor) is an active-site residue.

It belongs to the uracil-DNA glycosylase (UDG) superfamily. UNG family.

The protein localises to the cytoplasm. The catalysed reaction is Hydrolyzes single-stranded DNA or mismatched double-stranded DNA and polynucleotides, releasing free uracil.. In terms of biological role, excises uracil residues from the DNA which can arise as a result of misincorporation of dUMP residues by DNA polymerase or due to deamination of cytosine. The protein is Uracil-DNA glycosylase of Campylobacter hominis (strain ATCC BAA-381 / DSM 21671 / CCUG 45161 / LMG 19568 / NCTC 13146 / CH001A).